Reading from the N-terminus, the 436-residue chain is 3-phosphoshikimate 1-carboxyvinyltransferase (436 aa).

The 3-phosphoshikimate site is built by K23, S24, and R28. K23 serves as a coordination point for phosphoenolpyruvate. G97 and R126 together coordinate phosphoenolpyruvate. 3-phosphoshikimate is bound by residues S171, Q173, D323, and K350. Q173 is a binding site for phosphoenolpyruvate. The active-site Proton acceptor is the D323. Phosphoenolpyruvate contacts are provided by R354 and R396.

The protein belongs to the EPSP synthase family. In terms of assembly, monomer.

The protein resides in the cytoplasm. It catalyses the reaction 3-phosphoshikimate + phosphoenolpyruvate = 5-O-(1-carboxyvinyl)-3-phosphoshikimate + phosphate. The protein operates within metabolic intermediate biosynthesis; chorismate biosynthesis; chorismate from D-erythrose 4-phosphate and phosphoenolpyruvate: step 6/7. Functionally, catalyzes the transfer of the enolpyruvyl moiety of phosphoenolpyruvate (PEP) to the 5-hydroxyl of shikimate-3-phosphate (S3P) to produce enolpyruvyl shikimate-3-phosphate and inorganic phosphate. The chain is 3-phosphoshikimate 1-carboxyvinyltransferase from Prochlorococcus marinus (strain AS9601).